The sequence spans 484 residues: Calcium uniporter protein, mitochondrial (484 aa).

A mitochondrion-targeting transit peptide spans 1-33; that stretch reads MGHVLGGTLLAANRLARPPAVVLGKPRVCCWRA. At 34-304 the chain is on the mitochondrial matrix side; the sequence is SPWPVIVSSA…CDLLAHKGAH (271 aa). 2 disordered regions span residues 59-104 and 188-227; these read ARYE…KGRL and YTGG…DTHW. The span at 61-82 shows a compositional bias: basic and acidic residues; the sequence is YEARGRSTTQRKVDDRPWHRES. Polar residues predominate over residues 83–93; that stretch reads SGSLPKSTSPD. Residues 305-326 traverse the membrane as a helical segment; that stretch reads ALAKGGFAALAAWWGIVYYVTF. Topologically, residues 327–334 are mitochondrial intermembrane; sequence HTDMGWDL. The short motif at 332 to 340 is the Selectivity filter element; the sequence is WDLVEPITY. Residues 335–355 traverse the membrane as a helical segment; it reads VEPITYLAGLASIMGGYLWFL. Glutamate 336 provides a ligand contact to Ca(2+). Topologically, residues 356–484 are mitochondrial matrix; sequence FISRDLSYKA…NEAAANVPGD (129 aa). Composition is skewed to basic and acidic residues over residues 426–435 and 452–462; these read KEVLEEEKGG and DHDHDHDHVSH. The interval 426–484 is disordered; that stretch reads KEVLEEEKGGKARKREQEDEDGDGDDDHDHDHDHVSHGAELQGQDILHANEAAANVPGD.

This sequence belongs to the MCU (TC 1.A.77) family. As to quaternary structure, homotetramer, assembles in a dimer or dimers configuration with two interfaces.

It is found in the mitochondrion inner membrane. The enzyme catalyses Ca(2+)(in) = Ca(2+)(out). Its activity is regulated as follows. Inhibited by ruthenium red or its derivative Ru360. Highly selective calcium channel localized to the inner mitochondrial membrane, which mediates calcium uptake into the mitochondrial matrix. Mitochondrial calcium homeostasis plays key roles in cellular physiology and regulates ATP production, cytoplasmic calcium signals and activation of cell death pathways. Sufficient to operate as a pore-forming channel without the need of calcium-sensor or auxiliary subunit. The protein is Calcium uniporter protein, mitochondrial of Metarhizium acridum (strain CQMa 102).